The following is a 543-amino-acid chain: CTP synthase (543 aa).

The amidoligase domain stretch occupies residues 1–265 (MTRYIFVTGG…DDYVVERFGL (265 aa)). Serine 13 serves as a coordination point for CTP. Residue serine 13 coordinates UTP. ATP contacts are provided by residues 14–19 (SLGKGI) and aspartate 71. Positions 71 and 139 each coordinate Mg(2+). Residues 146–148 (DIE), 186–191 (KTKPTQ), and lysine 222 each bind CTP. UTP contacts are provided by residues 186–191 (KTKPTQ) and lysine 222. The Glutamine amidotransferase type-1 domain occupies 290 to 541 (NIAMVGKYME…VNAALEYKAK (252 aa)). Position 351 (glycine 351) interacts with L-glutamine. The active-site Nucleophile; for glutamine hydrolysis is the cysteine 378. L-glutamine is bound by residues 379-382 (LGMQ), glutamate 402, and arginine 469. Residues histidine 514 and glutamate 516 contribute to the active site.

The protein belongs to the CTP synthase family. Homotetramer.

The enzyme catalyses UTP + L-glutamine + ATP + H2O = CTP + L-glutamate + ADP + phosphate + 2 H(+). It carries out the reaction L-glutamine + H2O = L-glutamate + NH4(+). The catalysed reaction is UTP + NH4(+) + ATP = CTP + ADP + phosphate + 2 H(+). The protein operates within pyrimidine metabolism; CTP biosynthesis via de novo pathway; CTP from UDP: step 2/2. Its activity is regulated as follows. Allosterically activated by GTP, when glutamine is the substrate; GTP has no effect on the reaction when ammonia is the substrate. The allosteric effector GTP functions by stabilizing the protein conformation that binds the tetrahedral intermediate(s) formed during glutamine hydrolysis. Inhibited by the product CTP, via allosteric rather than competitive inhibition. Catalyzes the ATP-dependent amination of UTP to CTP with either L-glutamine or ammonia as the source of nitrogen. Regulates intracellular CTP levels through interactions with the four ribonucleotide triphosphates. The sequence is that of CTP synthase from Stutzerimonas stutzeri (strain A1501) (Pseudomonas stutzeri).